A 150-amino-acid chain; its full sequence is 3-hydroxyacyl-[acyl-carrier-protein] dehydratase FabZ (150 aa).

Histidine 54 is a catalytic residue.

The protein belongs to the thioester dehydratase family. FabZ subfamily.

Its subcellular location is the cytoplasm. The enzyme catalyses a (3R)-hydroxyacyl-[ACP] = a (2E)-enoyl-[ACP] + H2O. In terms of biological role, involved in unsaturated fatty acids biosynthesis. Catalyzes the dehydration of short chain beta-hydroxyacyl-ACPs and long chain saturated and unsaturated beta-hydroxyacyl-ACPs. The chain is 3-hydroxyacyl-[acyl-carrier-protein] dehydratase FabZ from Pseudoalteromonas translucida (strain TAC 125).